A 385-amino-acid polypeptide reads, in one-letter code: Succinate--CoA ligase [ADP-forming] subunit beta (385 aa).

An ATP-grasp domain is found at 9–244 (KEILRKYGVP…QDEEDPLETR (236 aa)). Residues K46, 53–55 (GRG), E99, C102, and E107 each bind ATP. Mg(2+)-binding residues include N199 and D213. Residues N264 and 321-323 (GIM) each bind substrate.

This sequence belongs to the succinate/malate CoA ligase beta subunit family. As to quaternary structure, heterotetramer of two alpha and two beta subunits. The cofactor is Mg(2+).

The enzyme catalyses succinate + ATP + CoA = succinyl-CoA + ADP + phosphate. It catalyses the reaction GTP + succinate + CoA = succinyl-CoA + GDP + phosphate. It functions in the pathway carbohydrate metabolism; tricarboxylic acid cycle; succinate from succinyl-CoA (ligase route): step 1/1. Functionally, succinyl-CoA synthetase functions in the citric acid cycle (TCA), coupling the hydrolysis of succinyl-CoA to the synthesis of either ATP or GTP and thus represents the only step of substrate-level phosphorylation in the TCA. The beta subunit provides nucleotide specificity of the enzyme and binds the substrate succinate, while the binding sites for coenzyme A and phosphate are found in the alpha subunit. The sequence is that of Succinate--CoA ligase [ADP-forming] subunit beta from Rickettsia bellii (strain OSU 85-389).